Consider the following 165-residue polypeptide: Phosphopantetheine adenylyltransferase (165 aa).

S10 lines the substrate pocket. ATP contacts are provided by residues 10–11 (SF) and H18. The substrate site is built by K42, L74, and R88. Residues 89–91 (GLR), E99, and 124–130 (YSFLSSS) each bind ATP.

The protein belongs to the bacterial CoaD family. As to quaternary structure, homohexamer. It depends on Mg(2+) as a cofactor.

It is found in the cytoplasm. It carries out the reaction (R)-4'-phosphopantetheine + ATP + H(+) = 3'-dephospho-CoA + diphosphate. Its pathway is cofactor biosynthesis; coenzyme A biosynthesis; CoA from (R)-pantothenate: step 4/5. Its function is as follows. Reversibly transfers an adenylyl group from ATP to 4'-phosphopantetheine, yielding dephospho-CoA (dPCoA) and pyrophosphate. The protein is Phosphopantetheine adenylyltransferase of Anoxybacillus flavithermus (strain DSM 21510 / WK1).